The sequence spans 349 residues: Green-sensitive opsin-2 (349 aa).

At 1-36 the chain is on the extracellular side; that stretch reads MNGTEGNNFYVPLSNRTGLVRSPFEYPQYYLAEPWQ. N-linked (GlcNAc...) asparagine glycosylation is found at Asn-2 and Asn-15. The helical transmembrane segment at 37 to 61 threads the bilayer; the sequence is FKLLAVYMFFLICLGLPINGLTLIC. Residues 62-73 lie on the Cytoplasmic side of the membrane; that stretch reads TAQHKKLRQPLN. The chain crosses the membrane as a helical span at residues 74 to 99; that stretch reads FILVNLAVAGAIMVCFGFTVTFYTAI. Residues 100–113 lie on the Extracellular side of the membrane; the sequence is NGYFALGPTGCAVE. Cysteines 110 and 187 form a disulfide. Residues 114 to 133 form a helical membrane-spanning segment; the sequence is GFMATLGGEVALWSLVVLAI. The Cytoplasmic segment spans residues 134–152; sequence ERYIVVCKPMGSFKFSSTH. Residues 153-176 traverse the membrane as a helical segment; it reads ASAGIAFTWVMAMACAAPPLVGWS. Over 177–202 the chain is Extracellular; sequence RYIPEGIQCSCGPDYYTLNPEYNNES. Residues 203-230 traverse the membrane as a helical segment; it reads YVLYMFICHFILPVTIIFFTYGRLVCTV. The Cytoplasmic segment spans residues 231-252; sequence KAAAAQQQDSASTQKAEREVTK. A helical membrane pass occupies residues 253–276; that stretch reads MVILMVLGFLVAWTPYATVAAWIF. Over 277-284 the chain is Extracellular; that stretch reads FNKGAAFS. The chain crosses the membrane as a helical span at residues 285 to 309; the sequence is AQFMAIPAFFSKTSALYNPVIYVLL. Lys-296 bears the N6-(retinylidene)lysine mark. The Cytoplasmic segment spans residues 310–349; it reads NKQFRSCMLTTLFCGKNPLGDEESSTVSTSKTEVSSVSPA. The interval 329 to 349 is disordered; the sequence is GDEESSTVSTSKTEVSSVSPA. The segment covering 334-349 has biased composition (low complexity); it reads STVSTSKTEVSSVSPA.

This sequence belongs to the G-protein coupled receptor 1 family. Opsin subfamily. Post-translationally, phosphorylated on some or all of the serine and threonine residues present in the C-terminal region. As to expression, the color pigments are found in the cone photoreceptor cells.

The protein localises to the membrane. Visual pigments are the light-absorbing molecules that mediate vision. They consist of an apoprotein, opsin, covalently linked to cis-retinal. This Carassius auratus (Goldfish) protein is Green-sensitive opsin-2.